Consider the following 141-residue polypeptide: DUF35 domain-containing scaffold protein (141 aa).

Positions 30, 33, 44, and 47 each coordinate Zn(2+).

The protein belongs to the scaffold protein DUF35 family. Interacts with acetoacetyl-CoA thiolase and HMG-CoA synthase (HMGCS) that catalyzes the first and second step in the mevalonate pathway, respectively.

Its function is as follows. Functions as a scaffold to connect the acetoacetyl-CoA thiolase and HMG-CoA synthase (HMGCS) dimers in the channeling thiolase/HMGCS complex, which allows for efficient coupling of the endergonic thiolase reaction with the exergonic HMGCS reaction. The protein is DUF35 domain-containing scaffold protein of Methanocaldococcus jannaschii (strain ATCC 43067 / DSM 2661 / JAL-1 / JCM 10045 / NBRC 100440) (Methanococcus jannaschii).